Reading from the N-terminus, the 306-residue chain is Acetyl-coenzyme A carboxylase carboxyl transferase subunit beta (306 aa).

The CoA carboxyltransferase N-terminal domain maps to 25–294 (LWIKCPETGE…TVVGANDDKT (270 aa)).

This sequence belongs to the AccD/PCCB family. In terms of assembly, acetyl-CoA carboxylase is a heterohexamer composed of biotin carboxyl carrier protein (AccB), biotin carboxylase (AccC) and two subunits each of ACCase subunit alpha (AccA) and ACCase subunit beta (AccD).

It localises to the cytoplasm. It catalyses the reaction N(6)-carboxybiotinyl-L-lysyl-[protein] + acetyl-CoA = N(6)-biotinyl-L-lysyl-[protein] + malonyl-CoA. It participates in lipid metabolism; malonyl-CoA biosynthesis; malonyl-CoA from acetyl-CoA: step 1/1. Functionally, component of the acetyl coenzyme A carboxylase (ACC) complex. Biotin carboxylase (BC) catalyzes the carboxylation of biotin on its carrier protein (BCCP) and then the CO(2) group is transferred by the transcarboxylase to acetyl-CoA to form malonyl-CoA. The protein is Acetyl-coenzyme A carboxylase carboxyl transferase subunit beta of Allorhizobium ampelinum (strain ATCC BAA-846 / DSM 112012 / S4) (Agrobacterium vitis (strain S4)).